A 419-amino-acid polypeptide reads, in one-letter code: Protein FAM181B (419 aa).

The interval 107–157 (LMGAAPPGPSSPGAADTPAKRPLAGAQTVPVPVPAHGKAAPRREASQAAAA) is disordered.

It belongs to the FAM181 family.

The chain is Protein FAM181B (FAM181B) from Bos taurus (Bovine).